A 309-amino-acid polypeptide reads, in one-letter code: Porphobilinogen deaminase (309 aa).

S-(dipyrrolylmethanemethyl)cysteine is present on Cys-241.

This sequence belongs to the HMBS family. Monomer. Requires dipyrromethane as cofactor.

It catalyses the reaction 4 porphobilinogen + H2O = hydroxymethylbilane + 4 NH4(+). It participates in porphyrin-containing compound metabolism; protoporphyrin-IX biosynthesis; coproporphyrinogen-III from 5-aminolevulinate: step 2/4. Functionally, tetrapolymerization of the monopyrrole PBG into the hydroxymethylbilane pre-uroporphyrinogen in several discrete steps. The polypeptide is Porphobilinogen deaminase (Bacillus mycoides (strain KBAB4) (Bacillus weihenstephanensis)).